A 315-amino-acid polypeptide reads, in one-letter code: G-box-binding factor 1 (315 aa).

Disordered stretches follow at residues 1–56 (MGTS…GSPS) and 93–268 (MPMP…RDEL). The segment covering 46-56 (PFFPSPVGSPS) has biased composition (pro residues). Polar residues-rich tracts occupy residues 133–164 (GSGNDGASHSDESVTAGSSDENDENANQQEQG) and 178–187 (ASSQSTTGEI). One can recognise a bZIP domain in the interval 222–285 (ELKRQKRKQS…DKLKSENNSI (64 aa)). The interval 224–243 (KRQKRKQSNRESARRSRLRK) is basic motif. Residues 249–262 (QLQQRVESLSNENQ) show a composition bias toward polar residues. The segment at 250 to 285 (LQQRVESLSNENQSLRDELQRLSSECDKLKSENNSI) is leucine-zipper.

It belongs to the bZIP family. As to quaternary structure, monomer and heterodimers with BZIP16 and BZIP68. Interacts with GIP1. In terms of processing, phosphorylated by CK2. As to expression, found in both light and dark grown leaves.

The protein localises to the nucleus. Functionally, binds to the G-box motif (5'-CCACGTGG-3') of the rbcS-1A gene promoter. G-box and G-box-like motifs are cis-acting elements defined in promoters of certain plant genes which are regulated by such diverse stimuli as light-induction or hormone control. Binds to the G-box motif 5'-CACGTG-3' of LHCB2.4 (At3g27690) promoter. May act as transcriptional activator in light-regulated expression of LHCB2.4. Probably binds DNA as monomer. DNA-binding activity is redox-dependent. This is G-box-binding factor 1 (GBF1) from Arabidopsis thaliana (Mouse-ear cress).